Reading from the N-terminus, the 466-residue chain is Probable periplasmic serine protease do/HhoA-like (466 aa).

Residues 1–29 (MKKTRFVLNSIALGLSVLSTSFVAHVAQA) form the signal peptide. Catalysis depends on charge relay system residues H120, D150, and S226. PDZ domains follow at residues 270 to 361 (ILEF…LRDG) and 367 to 458 (KMKL…LRGD).

The protein belongs to the peptidase S1C family.

The protein localises to the periplasm. The sequence is that of Probable periplasmic serine protease do/HhoA-like from Haemophilus influenzae (strain ATCC 51907 / DSM 11121 / KW20 / Rd).